A 311-amino-acid chain; its full sequence is 4-hydroxy-3-methylbut-2-enyl diphosphate reductase (311 aa).

A [4Fe-4S] cluster-binding site is contributed by Cys12. 2 residues coordinate (2E)-4-hydroxy-3-methylbut-2-enyl diphosphate: His41 and His74. Positions 41 and 74 each coordinate dimethylallyl diphosphate. Residues His41 and His74 each contribute to the isopentenyl diphosphate site. Residue Cys96 participates in [4Fe-4S] cluster binding. His124 contacts (2E)-4-hydroxy-3-methylbut-2-enyl diphosphate. His124 lines the dimethylallyl diphosphate pocket. An isopentenyl diphosphate-binding site is contributed by His124. The Proton donor role is filled by Glu126. Thr167 lines the (2E)-4-hydroxy-3-methylbut-2-enyl diphosphate pocket. [4Fe-4S] cluster is bound at residue Cys197. Positions 225, 226, 227, and 269 each coordinate (2E)-4-hydroxy-3-methylbut-2-enyl diphosphate. Ser225, Ser226, Asn227, and Ser269 together coordinate dimethylallyl diphosphate. Isopentenyl diphosphate contacts are provided by Ser225, Ser226, Asn227, and Ser269.

Belongs to the IspH family. [4Fe-4S] cluster serves as cofactor.

It carries out the reaction isopentenyl diphosphate + 2 oxidized [2Fe-2S]-[ferredoxin] + H2O = (2E)-4-hydroxy-3-methylbut-2-enyl diphosphate + 2 reduced [2Fe-2S]-[ferredoxin] + 2 H(+). The enzyme catalyses dimethylallyl diphosphate + 2 oxidized [2Fe-2S]-[ferredoxin] + H2O = (2E)-4-hydroxy-3-methylbut-2-enyl diphosphate + 2 reduced [2Fe-2S]-[ferredoxin] + 2 H(+). It participates in isoprenoid biosynthesis; dimethylallyl diphosphate biosynthesis; dimethylallyl diphosphate from (2E)-4-hydroxy-3-methylbutenyl diphosphate: step 1/1. Its pathway is isoprenoid biosynthesis; isopentenyl diphosphate biosynthesis via DXP pathway; isopentenyl diphosphate from 1-deoxy-D-xylulose 5-phosphate: step 6/6. Catalyzes the conversion of 1-hydroxy-2-methyl-2-(E)-butenyl 4-diphosphate (HMBPP) into a mixture of isopentenyl diphosphate (IPP) and dimethylallyl diphosphate (DMAPP). Acts in the terminal step of the DOXP/MEP pathway for isoprenoid precursor biosynthesis. The polypeptide is 4-hydroxy-3-methylbut-2-enyl diphosphate reductase (Aeromonas salmonicida (strain A449)).